The chain runs to 277 residues: MESAVDRHVFYISDGTAITAEVLGHAVMSQFPVAISSVTLPFVENISRARAVKEQIDAIYQQTGIRPLVFYSIVIPEIRDIILQSEGFCQDIVQALVAPLQQELNLDPTPVAHRTHGLNPGNLIKYDARIAAIDYTLAHDDGISLRNLDQAQVILLGVSRCGKTPTSLYLAMQYGIRAANYPFIADDMDNLVLPASLKPLQHKMFGLTINPERLAAIREERRENSRYASLRQCRMEVTEVEALYRKNKIPCLNSTNYSVEEIATKIMDIMGLNRRMY.

An ADP-binding site is contributed by 157 to 164 (GVSRCGKT).

Belongs to the pyruvate, phosphate/water dikinase regulatory protein family. PSRP subfamily.

The catalysed reaction is [pyruvate, water dikinase] + ADP = [pyruvate, water dikinase]-phosphate + AMP + H(+). The enzyme catalyses [pyruvate, water dikinase]-phosphate + phosphate + H(+) = [pyruvate, water dikinase] + diphosphate. Bifunctional serine/threonine kinase and phosphorylase involved in the regulation of the phosphoenolpyruvate synthase (PEPS) by catalyzing its phosphorylation/dephosphorylation. This chain is Putative phosphoenolpyruvate synthase regulatory protein, found in Klebsiella pneumoniae (strain 342).